A 221-amino-acid polypeptide reads, in one-letter code: Histone H1C (221 aa).

2 disordered regions span residues 1–43 (MSDP…PPVS) and 113–221 (AAKK…AKKA). In terms of domain architecture, H15 spans 38-112 (THPPVSEMVF…GALGSFKLPA (75 aa)). Basic residues-rich tracts occupy residues 141-167 (KVKKTIAKKPKAATATKIKKPVAKTTK) and 175-221 (AAKK…AKKA).

It belongs to the histone H1/H5 family.

The protein localises to the nucleus. The protein resides in the chromosome. Functionally, histones H1 are necessary for the condensation of nucleosome chains into higher-order structures. The protein is Histone H1C of Chironomus tentans (Midge).